A 702-amino-acid chain; its full sequence is Pheromone-processing carboxypeptidase KEX1 (702 aa).

The signal sequence occupies residues 1–19; sequence MKLILSTLIVFIHTLLVSA. The Lumenal segment spans residues 20 to 555; the sequence is LPTKEGSDPN…SDSTSSKFTR (536 aa). 2 N-linked (GlcNAc...) asparagine glycosylation sites follow: N85 and N122. Active-site residues include S184 and D394. 2 N-linked (GlcNAc...) asparagine glycosylation sites follow: N441 and N449. H452 is an active-site residue. The tract at residues 491 to 548 is disordered; it reads SRKESDASADGEENAGSDKVPGDSPSQTIDPMISSSTASSSSVESSLSSSTASADSDS. Over residues 524–548 the composition is skewed to low complexity; that stretch reads SSSTASSSSVESSLSSSTASADSDS. A helical membrane pass occupies residues 556–576; that stretch reads LIQLAVILVIFWGVYVLYASY. The Cytoplasmic portion of the chain corresponds to 577-702; it reads KSRPSSIIKK…THNQKQKPMN (126 aa). 2 disordered regions span residues 582–603 and 660–702; these read SIIKKPTNNTSNVTRSSAGKKK and IELG…KPMN. Composition is skewed to polar residues over residues 587–598 and 692–702; these read PTNNTSNVTRSS and ATHNQKQKPMN.

The protein belongs to the peptidase S10 family.

It is found in the golgi apparatus. The protein resides in the trans-Golgi network membrane. The enzyme catalyses Preferential release of a C-terminal arginine or lysine residue.. Its function is as follows. Protease with a carboxypeptidase B-like function involved in the C-terminal processing of the lysine and arginine residues from protein precursors. Promotes cell fusion and is involved in the programmed cell death. In Candida albicans (strain SC5314 / ATCC MYA-2876) (Yeast), this protein is Pheromone-processing carboxypeptidase KEX1 (KEX1).